The sequence spans 60 residues: MPERKTQPTTDQPWTKPNDGGDESGPRSPEVERPNTRDLLERMKRVDPRQARRYRQRSGE.

A disordered region spans residues 1–60; it reads MPERKTQPTTDQPWTKPNDGGDESGPRSPEVERPNTRDLLERMKRVDPRQARRYRQRSGE. The span at 29 to 50 shows a compositional bias: basic and acidic residues; sequence PEVERPNTRDLLERMKRVDPRQ. The span at 51–60 shows a compositional bias: basic residues; sequence ARRYRQRSGE. Residue glutamate 60 forms an Isoglutamyl lysine isopeptide (Glu-Lys) (interchain with K-? in acceptor proteins) linkage.

It belongs to the ubiquitin-like protein UBact family.

Its function is as follows. May function as a protein modifier covalently attached to lysine residues of substrate proteins. This may serve to target the modified proteins for degradation by proteasomes. This chain is Prokaryotic ubiquitin-like protein UBact, found in Fraserbacteria sp. (strain RBG_16_55_9).